We begin with the raw amino-acid sequence, 361 residues long: MTRAFNFSAGPATLPESVLRQAQEEMVEWNGVGASIVEISHRSADFMAVAAAAEADLRTLLSIPDDYAVLFTSGGATTIQALLPLNFAAPGQAVDYVVSGHWGKTAIKQATPYVDVRVAADGQPGGYVDIPPVASWTLSPHAAYVHITANETIHGVEFRDTPDVGTLPLFADFSSSIASEPLDIRRYGLIYAGAQKNLGPVGISVVIVRRELLERAGQPRADIFNYASHVARDSMLNTPPTWNWYLLGLTVKWMLEQGGVAAFAQCNAEKAALVYGAIDGSGGFYRNQVMPTVRSRMNIPFFLGDEQLDALFVSESKAAGLLALKGHKAVGGIRASLYNAMPVAGAQALVAFMHDFQQRHG.

Arg42 provides a ligand contact to L-glutamate. Residues 76-77, Trp102, Thr152, Asp172, and Gln195 contribute to the pyridoxal 5'-phosphate site; that span reads AT. Lys196 is modified (N6-(pyridoxal phosphate)lysine). 237–238 is a binding site for pyridoxal 5'-phosphate; that stretch reads NT.

Belongs to the class-V pyridoxal-phosphate-dependent aminotransferase family. SerC subfamily. In terms of assembly, homodimer. Requires pyridoxal 5'-phosphate as cofactor.

The protein localises to the cytoplasm. The enzyme catalyses O-phospho-L-serine + 2-oxoglutarate = 3-phosphooxypyruvate + L-glutamate. It carries out the reaction 4-(phosphooxy)-L-threonine + 2-oxoglutarate = (R)-3-hydroxy-2-oxo-4-phosphooxybutanoate + L-glutamate. Its pathway is amino-acid biosynthesis; L-serine biosynthesis; L-serine from 3-phospho-D-glycerate: step 2/3. It participates in cofactor biosynthesis; pyridoxine 5'-phosphate biosynthesis; pyridoxine 5'-phosphate from D-erythrose 4-phosphate: step 3/5. In terms of biological role, catalyzes the reversible conversion of 3-phosphohydroxypyruvate to phosphoserine and of 3-hydroxy-2-oxo-4-phosphonooxybutanoate to phosphohydroxythreonine. The protein is Phosphoserine aminotransferase of Xanthomonas campestris pv. campestris (strain B100).